Here is a 57-residue protein sequence, read N- to C-terminus: Delta-elapitoxin-Cb1a (57 aa).

4 cysteine pairs are disulfide-bonded: Cys-3/Cys-22, Cys-15/Cys-36, Cys-40/Cys-49, and Cys-50/Cys-55.

The protein belongs to the three-finger toxin family. Short-chain subfamily. In terms of tissue distribution, expressed by the venom gland.

The protein resides in the secreted. Functionally, this toxin shifts the voltage-dependence of Nav1.4/SCN4A activation to more hyperpolarised potentials, inhibits inactivation, and produces large ramp currents, consistent with its profound effects on contractile force in an isolated skeletal muscle preparation. This toxin produces large muscle contractions and fasciculations in the indirectly stimulated chick biventer cervicis nerve-muscle assay, which are significantly inhibited by the addition of the sodium channel antagonist tetrodotoxin. The protein is Delta-elapitoxin-Cb1a of Calliophis bivirgatus (Blue Malaysian coral snake).